A 181-amino-acid polypeptide reads, in one-letter code: ATP synthase subunit b, chloroplastic (181 aa).

The helical transmembrane segment at 28–50 (IINLSVVLGVLIYFGKGVLSNLL) threads the bilayer.

It belongs to the ATPase B chain family. In terms of assembly, F-type ATPases have 2 components, F(1) - the catalytic core - and F(0) - the membrane proton channel. F(1) has five subunits: alpha(3), beta(3), gamma(1), delta(1), epsilon(1). F(0) has four main subunits: a(1), b(1), b'(1) and c(10-14). The alpha and beta chains form an alternating ring which encloses part of the gamma chain. F(1) is attached to F(0) by a central stalk formed by the gamma and epsilon chains, while a peripheral stalk is formed by the delta, b and b' chains.

Its subcellular location is the plastid. It localises to the chloroplast thylakoid membrane. Functionally, f(1)F(0) ATP synthase produces ATP from ADP in the presence of a proton or sodium gradient. F-type ATPases consist of two structural domains, F(1) containing the extramembraneous catalytic core and F(0) containing the membrane proton channel, linked together by a central stalk and a peripheral stalk. During catalysis, ATP synthesis in the catalytic domain of F(1) is coupled via a rotary mechanism of the central stalk subunits to proton translocation. Component of the F(0) channel, it forms part of the peripheral stalk, linking F(1) to F(0). In Cryptomeria japonica (Japanese cedar), this protein is ATP synthase subunit b, chloroplastic.